The following is a 125-amino-acid chain: MPTFNQLIRHGREEKRRTDRTRALDQCPQKQGVCLRVLTITPKKPNSALRKIAKVRLTNRHDIFAYIPGEGHNSQEHSIVLVRGGRVKDLPGVKFHCIRGVKDLLGIPDRRRGRSKYGAEKPKSK.

This sequence belongs to the universal ribosomal protein uS12 family.

It localises to the mitochondrion. In terms of biological role, protein S12 is involved in the translation initiation step. The polypeptide is Small ribosomal subunit protein uS12m (RPS12) (Allium cepa (Onion)).